The primary structure comprises 129 residues: SPbeta prophage-derived protein NrdI (129 aa).

The protein belongs to the NrdI family.

In terms of biological role, probably involved in ribonucleotide reductase function. The protein is SPbeta prophage-derived protein NrdI (nrdIB) of Bacillus subtilis (strain 168).